A 101-amino-acid chain; its full sequence is Large ribosomal subunit protein uL24 (101 aa).

This sequence belongs to the universal ribosomal protein uL24 family. As to quaternary structure, part of the 50S ribosomal subunit.

Functionally, one of two assembly initiator proteins, it binds directly to the 5'-end of the 23S rRNA, where it nucleates assembly of the 50S subunit. Its function is as follows. One of the proteins that surrounds the polypeptide exit tunnel on the outside of the subunit. This Thermobifida fusca (strain YX) protein is Large ribosomal subunit protein uL24.